A 131-amino-acid polypeptide reads, in one-letter code: Phosphoribosyl-AMP cyclohydrolase (131 aa).

Aspartate 90 contacts Mg(2+). Cysteine 91 serves as a coordination point for Zn(2+). The Mg(2+) site is built by aspartate 92 and aspartate 94. The Zn(2+) site is built by cysteine 107 and cysteine 114.

Belongs to the PRA-CH family. As to quaternary structure, homodimer. It depends on Mg(2+) as a cofactor. Requires Zn(2+) as cofactor.

Its subcellular location is the cytoplasm. It catalyses the reaction 1-(5-phospho-beta-D-ribosyl)-5'-AMP + H2O = 1-(5-phospho-beta-D-ribosyl)-5-[(5-phospho-beta-D-ribosylamino)methylideneamino]imidazole-4-carboxamide. Its pathway is amino-acid biosynthesis; L-histidine biosynthesis; L-histidine from 5-phospho-alpha-D-ribose 1-diphosphate: step 3/9. Its function is as follows. Catalyzes the hydrolysis of the adenine ring of phosphoribosyl-AMP. This chain is Phosphoribosyl-AMP cyclohydrolase, found in Hyphomonas neptunium (strain ATCC 15444).